The chain runs to 326 residues: tRNA-modifying protein YgfZ (326 aa).

Trp27 and Trp189 together coordinate folate.

This sequence belongs to the tRNA-modifying YgfZ family.

It is found in the cytoplasm. In terms of biological role, folate-binding protein involved in regulating the level of ATP-DnaA and in the modification of some tRNAs. It is probably a key factor in regulatory networks that act via tRNA modification, such as initiation of chromosomal replication. In Escherichia coli O45:K1 (strain S88 / ExPEC), this protein is tRNA-modifying protein YgfZ.